We begin with the raw amino-acid sequence, 286 residues long: PTS system mannose-specific EIID component (286 aa).

The residue at position 1 (Met-1) is an N-formylmethionine. Residues 1–17 lie on the Cytoplasmic side of the membrane; it reads MSEMVDTTQTTTEKKLT. One can recognise a PTS EIID domain in the interval 14-284; the sequence is KKLTQSDIRG…GIAGYACGLL (271 aa). Residues 18 to 55 lie within the membrane without spanning it; sequence QSDIRGVFLRSNLFQGSWNFERMQALGFCFSMVPAIRR. Topologically, residues 56-62 are cytoplasmic; that stretch reads LYPENNE. The stretch at 63-95 is an intramembrane region; that stretch reads ARKQAIRRHLEFFNTQPFVAAPILGVTLALEEQ. Topologically, residues 96-103 are cytoplasmic; sequence RANGAEID. Over 104-143 the chain traverses the membrane; it reads DGAINGIKVGLMGPLAGVGDPIFWGTVRPVFAALGAGIAM. Residues 144–147 lie on the Periplasmic side of the membrane; sequence SGSL. The segment at 148–176 is a transmembrane helix; the sequence is LGPLLFFILFNLVRLATRYYGVAYGYSKG. Residues 177–186 are Cytoplasmic-facing; the sequence is IDIVKDMGGG. Positions 187–212 form a transmembrane segment; the sequence is FLQKLTEGASILGLFVMGALVNKWTH. Over 213-244 the chain is Periplasmic; sequence VNIPLVVSRITDQTGKEHVTTVQTILDQLMPG. The chain crosses the lipid bilayer at residues 245–258; it reads LVPLLLTFACMWLL. Residues 259–264 lie on the Cytoplasmic side of the membrane; that stretch reads RKKVNP. A membrane pass occupies residues 265 to 283; that stretch reads LWIIVGFFVIGIAGYACGL. The Periplasmic portion of the chain corresponds to 284–286; sequence LGL.

Homotrimer of protomers that are composed of two subunits, IIC and IID.

The protein resides in the cell inner membrane. The phosphoenolpyruvate-dependent sugar phosphotransferase system (sugar PTS), a major carbohydrate active transport system, catalyzes the phosphorylation of incoming sugar substrates concomitantly with their translocation across the cell membrane. The enzyme II ManXYZ PTS system is involved in mannose transport. This Escherichia coli O6:H1 (strain CFT073 / ATCC 700928 / UPEC) protein is PTS system mannose-specific EIID component (manZ).